Consider the following 446-residue polypeptide: Na(+)-translocating NADH-quinone reductase subunit A (446 aa).

It belongs to the NqrA family. In terms of assembly, composed of six subunits; NqrA, NqrB, NqrC, NqrD, NqrE and NqrF.

The enzyme catalyses a ubiquinone + n Na(+)(in) + NADH + H(+) = a ubiquinol + n Na(+)(out) + NAD(+). Functionally, NQR complex catalyzes the reduction of ubiquinone-1 to ubiquinol by two successive reactions, coupled with the transport of Na(+) ions from the cytoplasm to the periplasm. NqrA to NqrE are probably involved in the second step, the conversion of ubisemiquinone to ubiquinol. This is Na(+)-translocating NADH-quinone reductase subunit A from Vibrio anguillarum (Listonella anguillarum).